A 365-amino-acid chain; its full sequence is Probable UDP-arabinopyranose mutase 1 (365 aa).

The DXD motif signature appears at 100–102; that stretch reads DDD. R148 carries N-linked (Glc...) arginine glycosylation.

This sequence belongs to the RGP family. In terms of assembly, homopentamer or homohexamer. Mn(2+) serves as cofactor. The cofactor is Mg(2+). Reversibly glycosylated by UDP-glucose, UDP-xylose and UDP-galactose, but not UDP-mannose. Expressed in all tissues tested, including root, tuber, leaf, petiole, shoot, stolon and stem.

The protein localises to the secreted. It is found in the cell wall. Its subcellular location is the cell junction. It localises to the plasmodesma. The protein resides in the golgi apparatus. It catalyses the reaction UDP-beta-L-arabinofuranose = UDP-beta-L-arabinopyranose. Its function is as follows. Probable UDP-L-arabinose mutase involved in the biosynthesis of cell wall non-cellulosic polysaccharides. Was initially shown to possess an autoglycosylating activity which is dependent on the presence of UDP-glucose and manganese. In Solanum tuberosum (Potato), this protein is Probable UDP-arabinopyranose mutase 1.